A 607-amino-acid chain; its full sequence is Monocarboxylate transporter 7 (607 aa).

The disordered stretch occupies residues 1–84; sequence MRASGQGPQR…PAETGCSRSR (84 aa). Topologically, residues 1–105 are cytoplasmic; the sequence is MRASGQGPQR…ANVYTQVPDG (105 aa). The helical transmembrane segment at 106 to 126 threads the bilayer; it reads GWGWAVAVSFFFVEVFTYGII. Over 127-146 the chain is Extracellular; sequence KSFGVFFNDLMDSFDESNSK. The helical transmembrane segment at 147–167 threads the bilayer; sequence ISWIISICVFVLTFTAPLSTV. Topologically, residues 168–175 are cytoplasmic; that stretch reads LSNRFGHR. A helical membrane pass occupies residues 176–196; it reads LVVMAGGLLISLGMITASFSQ. The Extracellular segment spans residues 197 to 202; it reads RVYHMY. Residues 203–223 form a helical membrane-spanning segment; the sequence is ISIGVISGLGYCFSFLPTVTI. The Cytoplasmic portion of the chain corresponds to 224–233; the sequence is LSQYFDKRRS. Residues 234–254 form a helical membrane-spanning segment; it reads VVTAVASTGECFAVFAFAPAI. The Extracellular portion of the chain corresponds to 255–268; that stretch reads TALKEHIGWRYSLL. The chain crosses the membrane as a helical span at residues 269 to 289; it reads FVGLLQLNIMVCGALLRPIII. Residues 290-383 lie on the Cytoplasmic side of the membrane; that stretch reads QGPGQSPKAV…KEKSFICYAL (94 aa). A phosphoserine mark is found at Ser-319, Ser-322, Ser-325, and Ser-332. A helical membrane pass occupies residues 384–404; sequence FGLFATLGFFAPSLYIIPLGI. Topologically, residues 405–414 are extracellular; it reads SLGIDPDRAA. Residues 415–435 traverse the membrane as a helical segment; the sequence is FLLSTMAIAEVFGRIGAGFVL. Residues 436–442 are Cytoplasmic-facing; it reads NREPIRK. A helical membrane pass occupies residues 443-463; that stretch reads IYIELICVILLTASLFAFTFA. At 464–465 the chain is on the extracellular side; that stretch reads TE. A helical transmembrane segment spans residues 466–486; the sequence is FWGLMLCSVFFGSMVGTIGGT. Topologically, residues 487–507 are cytoplasmic; that stretch reads HIPMLAEDDVVGIEKMSSAAG. The chain crosses the membrane as a helical span at residues 508-528; it reads VYVFIQSISGLAGPPLAGLLV. The Extracellular segment spans residues 529–536; it reads DQSKIYSR. A helical membrane pass occupies residues 537–557; that stretch reads AFYSCAAGMCLAAVCLALVRP. At 558–607 the chain is on the cytoplasmic side; it reads CKKGLCQNSHSGENQTDRQRGKALQDIPEDFLEMDLGKCEHRAHMKMDPV.

The protein belongs to the major facilitator superfamily. Monocarboxylate porter (TC 2.A.1.13) family. Forms functional complexes with BSG/CD147 or EMB/GP70 ancillary proteins.

Its subcellular location is the basolateral cell membrane. The catalysed reaction is taurine(out) = taurine(in). Monocarboxylate transporter selective for taurine. May associate with BSG/CD147 or EMB/GP70 ancillary proteins to mediate facilitative efflux or influx of taurine across the plasma membrane. The transport is pH- and sodium-independent. Rather low-affinity, is likely effective for taurine transport in tissues where taurine is present at high concentrations. In Mus musculus (Mouse), this protein is Monocarboxylate transporter 7.